We begin with the raw amino-acid sequence, 325 residues long: Ribosomal RNA small subunit methyltransferase H (325 aa).

Residues 32-34, Asp52, Phe79, Asp100, and Gln107 each bind S-adenosyl-L-methionine; that span reads GGH.

This sequence belongs to the methyltransferase superfamily. RsmH family.

It is found in the cytoplasm. It catalyses the reaction cytidine(1402) in 16S rRNA + S-adenosyl-L-methionine = N(4)-methylcytidine(1402) in 16S rRNA + S-adenosyl-L-homocysteine + H(+). Specifically methylates the N4 position of cytidine in position 1402 (C1402) of 16S rRNA. The chain is Ribosomal RNA small subunit methyltransferase H from Oceanobacillus iheyensis (strain DSM 14371 / CIP 107618 / JCM 11309 / KCTC 3954 / HTE831).